The following is a 255-amino-acid chain: Homeobox-leucine zipper protein ATHB-23 (255 aa).

The homeobox DNA-binding region spans 68 to 127 (MGEKKRRLNMEQLKALEKDFELGNKLESDRKLELARALGLQPRQIAIWFQNRRARSKTKQ). A leucine-zipper region spans residues 128 to 163 (LEKDYDMLKRQFESLRDENEVLQTQNQKLQAQVMAL).

Belongs to the HD-ZIP homeobox family. Class I subfamily. Expressed in young leaves, in the adaxial domain of leaf primordia and the rib meristem. Expressed in the styles of flowers and siliques.

The protein localises to the nucleus. In terms of biological role, probable transcription factor. The sequence is that of Homeobox-leucine zipper protein ATHB-23 (ATHB-23) from Arabidopsis thaliana (Mouse-ear cress).